Here is a 220-residue protein sequence, read N- to C-terminus: Protein GrpE (220 aa).

2 stretches are compositionally biased toward polar residues: residues 1 to 12 (MEQGDKQATYNE) and 50 to 63 (AAST…QTSV). The tract at residues 1–67 (MEQGDKQATY…AEQTSVEAEE (67 aa)) is disordered.

Belongs to the GrpE family. As to quaternary structure, homodimer.

Its subcellular location is the cytoplasm. In terms of biological role, participates actively in the response to hyperosmotic and heat shock by preventing the aggregation of stress-denatured proteins, in association with DnaK and GrpE. It is the nucleotide exchange factor for DnaK and may function as a thermosensor. Unfolded proteins bind initially to DnaJ; upon interaction with the DnaJ-bound protein, DnaK hydrolyzes its bound ATP, resulting in the formation of a stable complex. GrpE releases ADP from DnaK; ATP binding to DnaK triggers the release of the substrate protein, thus completing the reaction cycle. Several rounds of ATP-dependent interactions between DnaJ, DnaK and GrpE are required for fully efficient folding. The sequence is that of Protein GrpE from Geobacillus thermodenitrificans (strain NG80-2).